The following is a 185-amino-acid chain: Elongation factor P 1 (185 aa).

It belongs to the elongation factor P family.

Its subcellular location is the cytoplasm. Its pathway is protein biosynthesis; polypeptide chain elongation. Involved in peptide bond synthesis. Stimulates efficient translation and peptide-bond synthesis on native or reconstituted 70S ribosomes in vitro. Probably functions indirectly by altering the affinity of the ribosome for aminoacyl-tRNA, thus increasing their reactivity as acceptors for peptidyl transferase. The chain is Elongation factor P 1 (efp1) from Chlamydia pneumoniae (Chlamydophila pneumoniae).